The primary structure comprises 328 residues: Flap endonuclease 1 (328 aa).

The N-domain stretch occupies residues 1 to 98 (MGVKLRDVVS…ETVSRRADIR (98 aa)). Positions 27, 80, 152, 154, 173, 175, and 226 each coordinate Mg(2+). Residues 116-247 (RAKKYAVRSS…RGLKLIREKG (132 aa)) form an I-domain region. The interval 320 to 328 (TQKSLEDWF) is interaction with PCNA.

It belongs to the XPG/RAD2 endonuclease family. FEN1 subfamily. Interacts with PCNA. PCNA stimulates the nuclease activity without altering cleavage specificity. It depends on Mg(2+) as a cofactor.

Its function is as follows. Structure-specific nuclease with 5'-flap endonuclease and 5'-3' exonuclease activities involved in DNA replication and repair. During DNA replication, cleaves the 5'-overhanging flap structure that is generated by displacement synthesis when DNA polymerase encounters the 5'-end of a downstream Okazaki fragment. Binds the unpaired 3'-DNA end and kinks the DNA to facilitate 5' cleavage specificity. Cleaves one nucleotide into the double-stranded DNA from the junction in flap DNA, leaving a nick for ligation. Also involved in the base excision repair (BER) pathway. Acts as a genome stabilization factor that prevents flaps from equilibrating into structures that lead to duplications and deletions. Also possesses 5'-3' exonuclease activity on nicked or gapped double-stranded DNA. The sequence is that of Flap endonuclease 1 from Methanothermobacter thermautotrophicus (strain ATCC 29096 / DSM 1053 / JCM 10044 / NBRC 100330 / Delta H) (Methanobacterium thermoautotrophicum).